The following is a 459-amino-acid chain: Transcription factor mlcR (459 aa).

A DNA-binding region (zn(2)-C6 fungal-type) is located at residues 21 to 53 (CDRCHAQKLKCTGSNANLVRAQCQRCQQAGLRC). Disordered stretches follow at residues 64–84 (LHKE…PMTA) and 135–170 (DPES…DFEG). Positions 69–78 (AAGTTRATET) are enriched in low complexity.

It localises to the nucleus. Transcription factor that regulates the gene cluster that mediates the biosynthesis of compactin, also known as mevastatin or ML-236B, and which acts as a potent competitive inhibitor of HMG-CoA reductase. Binds to the consensus-binding motif 5'-WCGG-N(6)-TCGG-3' of target genes. The protein is Transcription factor mlcR of Penicillium citrinum.